The following is a 149-amino-acid chain: UPF0336 protein Lxx02810 (149 aa).

Belongs to the UPF0336 family.

The polypeptide is UPF0336 protein Lxx02810 (Leifsonia xyli subsp. xyli (strain CTCB07)).